The sequence spans 259 residues: MLPSTSLSSSMHGNGVLNSRDAARHTAGAKRYKYLRRLFRFRQMDFEFAAWQMLYLFTSPQRVYRNFHYRKQTKDQWARDDPAFLVLLSIWLCVSTIGFGFVLDMGFFETIKLLLWVVFIDCVGVGLLISTLMWFVSNKYLVKRQSRDYDVEWGYAFDVHLNAFYPLLVILHFIQLFFINHVILTDTFIGYLVGNTLWLIAVGYYIYVTFLGYSALPFLKNTVILLYPFAPLMVLYGLSLALGWNFTHTLCSFYKYRVK.

Residue Met-1 is modified to N-acetylmethionine. Residues 1–82 (MLPSTSLSSS…TKDQWARDDP (82 aa)) lie on the Cytoplasmic side of the membrane. Ser-6 bears the Phosphoserine mark. A helical transmembrane segment spans residues 83 to 103 (AFLVLLSIWLCVSTIGFGFVL). The Lumenal segment spans residues 104–112 (DMGFFETIK). Residues 113 to 133 (LLLWVVFIDCVGVGLLISTLM) traverse the membrane as a helical segment. Topologically, residues 134-163 (WFVSNKYLVKRQSRDYDVEWGYAFDVHLNA) are cytoplasmic. A helical transmembrane segment spans residues 164-184 (FYPLLVILHFIQLFFINHVIL). Residues 185 to 187 (TDT) are Lumenal-facing. The helical transmembrane segment at 188–208 (FIGYLVGNTLWLIAVGYYIYV) threads the bilayer. Residues 209 to 222 (TFLGYSALPFLKNT) are Cytoplasmic-facing. Residues 223–243 (VILLYPFAPLMVLYGLSLALG) traverse the membrane as a helical segment. Residues 244 to 259 (WNFTHTLCSFYKYRVK) lie on the Lumenal side of the membrane.

Belongs to the unc-50 family. As to expression, highly expressed in periodontal ligament and bone marrow, but not in gingival fibroblasts.

It is found in the nucleus inner membrane. The protein resides in the golgi apparatus membrane. Functionally, involved in the cell surface expression of neuronal nicotinic receptors. Binds RNA. The protein is Protein unc-50 homolog (Unc50) of Mus musculus (Mouse).